A 328-amino-acid polypeptide reads, in one-letter code: MYTLHTKRVKAAAREMWTSNVSKVRQSFKNVYHKCKIRHQDSTRYPTVTSDDCNQDDVSYDGKMNLTVVLQDVKTAQVELFSQMTDIVHAIPKVHEKTDLYQKQMEVLETRMNVNEDKQGTTTKDILSMKEDIKALKKKVTELEKQNSYSRIHCLEIPEGERGEEITELLYKLIQPATLKNTLASTDREMSSAEPEKVPSYPKSTDHLEKITISPQIKTLKKRNHQNASRNFKIAKPNIYIYPDFSTWIKLTFVHGGKWTFFLSATKLEEFIQWLLSRPTILPEEPQVITQRYCPFTGLILSLTTICLSMFNNIYGFIRSLKEEVTRL.

Residues 122–151 (TTKDILSMKEDIKALKKKVTELEKQNSYSR) adopt a coiled-coil conformation. A Phosphothreonine modification is found at Thr182. Basic and acidic residues predominate over residues 186 to 197 (TDREMSSAEPEK). The disordered stretch occupies residues 186–205 (TDREMSSAEPEKVPSYPKST).

This chain is Coiled-coil domain-containing protein 54 (CCDC54), found in Macaca fascicularis (Crab-eating macaque).